We begin with the raw amino-acid sequence, 143 residues long: Large ribosomal subunit protein uL11 (143 aa).

Belongs to the universal ribosomal protein uL11 family. Part of the ribosomal stalk of the 50S ribosomal subunit. Interacts with L10 and the large rRNA to form the base of the stalk. L10 forms an elongated spine to which L12 dimers bind in a sequential fashion forming a multimeric L10(L12)X complex. In terms of processing, one or more lysine residues are methylated.

Functionally, forms part of the ribosomal stalk which helps the ribosome interact with GTP-bound translation factors. The chain is Large ribosomal subunit protein uL11 from Leifsonia xyli subsp. xyli (strain CTCB07).